The primary structure comprises 485 residues: Glutamate mutase epsilon subunit (485 aa).

R66 provides a ligand contact to L-glutamate. G68 contributes to the adenosylcob(III)alamin binding site. R100 provides a ligand contact to L-glutamate. Residue N123 coordinates adenosylcob(III)alamin. L-glutamate contacts are provided by residues 149 to 150 (RH), E171, and Y177. P180 is an adenosylcob(III)alamin binding site. Position 181 (Y181) interacts with L-glutamate. Adenosylcob(III)alamin contacts are provided by F297, K326, E330, and I334.

It belongs to the methylaspartate mutase GlmE subunit family. Heterotetramer composed of 2 epsilon subunits (GlmE) and 2 sigma subunits (GlmS). GlmE exists as a homodimer and GlmS as a monomer. The cofactor is adenosylcob(III)alamin.

The enzyme catalyses (2S,3S)-3-methyl-L-aspartate = L-glutamate. Its pathway is amino-acid degradation; L-glutamate degradation via mesaconate pathway; acetate and pyruvate from L-glutamate: step 1/4. Functionally, catalyzes the carbon skeleton rearrangement of L-glutamate to L-threo-3-methylaspartate ((2S,3S)-3-methylaspartate). The protein is Glutamate mutase epsilon subunit of Treponema denticola (strain ATCC 35405 / DSM 14222 / CIP 103919 / JCM 8153 / KCTC 15104).